The primary structure comprises 139 residues: Large ribosomal subunit protein uL16c (139 aa).

The segment covering 1 to 17 has biased composition (basic residues); it reads MLSPKKTKFRKQHRGRM. The disordered stretch occupies residues 1–23; it reads MLSPKKTKFRKQHRGRMKGSASK.

This sequence belongs to the universal ribosomal protein uL16 family. Part of the 50S ribosomal subunit.

The protein localises to the plastid. It is found in the chloroplast. The polypeptide is Large ribosomal subunit protein uL16c (Pyropia yezoensis (Susabi-nori)).